The primary structure comprises 303 residues: Diacylglycerol kinase (303 aa).

Positions Met1–Tyr132 constitute a DAGKc domain. ATP-binding positions include Asn9–Gly13, Thr40, Gly66–Glu72, and Thr93. Ser213, Asp216, and Met218 together coordinate Mg(2+). The Proton acceptor role is filled by Glu273.

This sequence belongs to the diacylglycerol/lipid kinase family. Mg(2+) is required as a cofactor.

The catalysed reaction is a 1,2-diacyl-sn-glycerol + ATP = a 1,2-diacyl-sn-glycero-3-phosphate + ADP + H(+). The enzyme catalyses 1,2-di-(9Z-octadecenoyl)-sn-glycerol + ATP = 1,2-di-(9Z-octadecenoyl)-sn-glycero-3-phosphate + ADP + H(+). In terms of biological role, catalyzes the phosphorylation of diacylglycerol (DAG) into phosphatidic acid. Is a key enzyme involved in the production of lipoteichoic acid by reintroducing DAG formed from the breakdown of membrane phospholipids into the phosphatidylglycerol biosynthetic pathway. Is more active toward long-chain DAG compared with short-chain DAG. Is not able to phosphorylate substrates other than DAG, such as monoacylglycerol, ceramide, undecaprenol, phosphatidylinositol, or sphingosine. The sequence is that of Diacylglycerol kinase (dagK) from Bacillus subtilis (strain 168).